The primary structure comprises 396 residues: L-lactate dehydrogenase (396 aa).

The FMN hydroxy acid dehydrogenase domain maps to 1 to 380; the sequence is MIISAASDYR…TQDSLVQGLG (380 aa). Y24 serves as a coordination point for substrate. FMN contacts are provided by S106 and Q127. Y129 is a binding site for substrate. Residue T155 participates in FMN binding. R164 contributes to the substrate binding site. Residue K251 coordinates FMN. H275 (proton acceptor) is an active-site residue. R278 contacts substrate. Position 306 to 330 (306 to 330) interacts with FMN; sequence DSGIRNGLDVVRMIALGADTVLLGR.

The protein belongs to the FMN-dependent alpha-hydroxy acid dehydrogenase family. Requires FMN as cofactor.

The protein localises to the cell inner membrane. It catalyses the reaction (S)-lactate + A = pyruvate + AH2. Functionally, catalyzes the conversion of L-lactate to pyruvate. Is coupled to the respiratory chain. The protein is L-lactate dehydrogenase of Shigella boydii serotype 4 (strain Sb227).